We begin with the raw amino-acid sequence, 466 residues long: Soluble pyridine nucleotide transhydrogenase (466 aa).

Glu36–Cys45 contributes to the FAD binding site.

This sequence belongs to the class-I pyridine nucleotide-disulfide oxidoreductase family. The cofactor is FAD.

It localises to the cytoplasm. It catalyses the reaction NAD(+) + NADPH = NADH + NADP(+). Its function is as follows. Conversion of NADPH, generated by peripheral catabolic pathways, to NADH, which can enter the respiratory chain for energy generation. This Salmonella paratyphi A (strain ATCC 9150 / SARB42) protein is Soluble pyridine nucleotide transhydrogenase.